The following is a 311-amino-acid chain: Ribonuclease HIII (311 aa).

Residues 95 to 311 (MSIVGSDEVG…NTEKAFRLLK (217 aa)) form the RNase H type-2 domain. The a divalent metal cation site is built by D101, E102, and D206.

The protein belongs to the RNase HII family. RnhC subfamily. It depends on Mn(2+) as a cofactor. The cofactor is Mg(2+).

It localises to the cytoplasm. It carries out the reaction Endonucleolytic cleavage to 5'-phosphomonoester.. Its function is as follows. Endonuclease that specifically degrades the RNA of RNA-DNA hybrids. The polypeptide is Ribonuclease HIII (Bacillus cereus (strain AH187)).